The following is a 47-amino-acid chain: uncharacterized protein (47 aa).

Positions 1–25 are cleaved as a signal peptide; that stretch reads MAHKCASAKLLSGIMALLFNGKSLL.

This is an uncharacterized protein from Saccharomyces cerevisiae (strain ATCC 204508 / S288c) (Baker's yeast).